A 114-amino-acid polypeptide reads, in one-letter code: Acetyltransferase At1g77540 (114 aa).

Residue Thr-2 is modified to N-acetylthreonine. An N-acetyltransferase domain is found at 18 to 106; that stretch reads KIVWNEGKRR…RNPSWKPLIH (89 aa). CoA contacts are provided by residues 52-55 and 61-66; these read HTYV and GLGLAS. The Nucleophile role is filled by Cys-87. CoA-binding positions include 88–89, Thr-93, and Arg-97; that span reads SY.

The protein resides in the peroxisome. Its function is as follows. Possesses in vitro histone acetyltransferase activity with histones H3 and H4. This is Acetyltransferase At1g77540 from Arabidopsis thaliana (Mouse-ear cress).